Reading from the N-terminus, the 180-residue chain is Acireductone dioxygenase (180 aa).

4 residues coordinate Fe(2+): H97, H99, E103, and H141. 4 residues coordinate Ni(2+): H97, H99, E103, and H141.

Belongs to the acireductone dioxygenase (ARD) family. Monomer. The cofactor is Fe(2+). Mg(2+) is required as a cofactor. Ni(2+) serves as cofactor. Requires Mn(2+) as cofactor. It depends on Co(2+) as a cofactor.

The catalysed reaction is 1,2-dihydroxy-5-(methylsulfanyl)pent-1-en-3-one + O2 = 3-(methylsulfanyl)propanoate + CO + formate + 2 H(+). It carries out the reaction 1,2-dihydroxy-5-(methylsulfanyl)pent-1-en-3-one + O2 = 4-methylsulfanyl-2-oxobutanoate + formate + 2 H(+). Its pathway is amino-acid biosynthesis; L-methionine biosynthesis via salvage pathway; L-methionine from S-methyl-5-thio-alpha-D-ribose 1-phosphate: step 5/6. Catalyzes 2 different reactions between oxygen and the acireductone 1,2-dihydroxy-3-keto-5-methylthiopentene (DHK-MTPene) depending upon the metal bound in the active site. Fe-containing acireductone dioxygenase (Fe-ARD) produces formate and 2-keto-4-methylthiobutyrate (KMTB), the alpha-ketoacid precursor of methionine in the methionine recycle pathway. Ni-containing acireductone dioxygenase (Ni-ARD) produces methylthiopropionate, carbon monoxide and formate, and does not lie on the methionine recycle pathway. The protein is Acireductone dioxygenase (mtnD) of Klebsiella oxytoca.